A 231-amino-acid polypeptide reads, in one-letter code: Aldehyde decarbonylase (231 aa).

Fe cation-binding residues include Glu-32, Glu-60, His-63, Glu-115, and His-147.

It belongs to the aldehyde decarbonylase family. It depends on Binds 2 metal cations per subunit. The catalytic dinuclear metal-binding site could be either a di-iron or a manganese-iron cofactor. as a cofactor.

It catalyses the reaction a long-chain fatty aldehyde + 2 NADPH + O2 + H(+) = a long-chain alkane + formate + 2 NADP(+) + H2O. Functionally, catalyzes the decarbonylation of fatty aldehydes to alkanes. Requires the presence of ferredoxin, ferredoxin reductase and NADPH for in vitro decarbonylase activity. Involved in the biosynthesis of alkanes, mainly heptadecane and pentadecane. In Synechococcus elongatus (strain ATCC 33912 / PCC 7942 / FACHB-805) (Anacystis nidulans R2), this protein is Aldehyde decarbonylase.